The sequence spans 477 residues: Bifunctional protein HldE (477 aa).

The segment at methionine 1 to alanine 319 is ribokinase. Asparagine 195–glutamate 198 lines the ATP pocket. Residue aspartate 264 is part of the active site. A cytidylyltransferase region spans residues methionine 346 to glycine 477.

In the N-terminal section; belongs to the carbohydrate kinase PfkB family. This sequence in the C-terminal section; belongs to the cytidylyltransferase family. Homodimer.

The catalysed reaction is D-glycero-beta-D-manno-heptose 7-phosphate + ATP = D-glycero-beta-D-manno-heptose 1,7-bisphosphate + ADP + H(+). It carries out the reaction D-glycero-beta-D-manno-heptose 1-phosphate + ATP + H(+) = ADP-D-glycero-beta-D-manno-heptose + diphosphate. The protein operates within nucleotide-sugar biosynthesis; ADP-L-glycero-beta-D-manno-heptose biosynthesis; ADP-L-glycero-beta-D-manno-heptose from D-glycero-beta-D-manno-heptose 7-phosphate: step 1/4. It participates in nucleotide-sugar biosynthesis; ADP-L-glycero-beta-D-manno-heptose biosynthesis; ADP-L-glycero-beta-D-manno-heptose from D-glycero-beta-D-manno-heptose 7-phosphate: step 3/4. Catalyzes the phosphorylation of D-glycero-D-manno-heptose 7-phosphate at the C-1 position to selectively form D-glycero-beta-D-manno-heptose-1,7-bisphosphate. Its function is as follows. Catalyzes the ADP transfer from ATP to D-glycero-beta-D-manno-heptose 1-phosphate, yielding ADP-D-glycero-beta-D-manno-heptose. The polypeptide is Bifunctional protein HldE (Halorhodospira halophila (strain DSM 244 / SL1) (Ectothiorhodospira halophila (strain DSM 244 / SL1))).